The following is a 187-amino-acid chain: MSKSALVILAPGAEEMEFIIAADVLRRAGIKVTVAGLNGGEAVKCSRDVQILPDTSLAQVASDKFDVVVLPGGLGGSNAMGESSLVGDLLRSQESGGGLIAAICAAPTVLAKHGVASGKSLTSYPSMKPQLVNNYSYVDDKTVVKDGNLITSRGPGTAYEFALKIAEELAGKEKVQEVAKGLLVAYN.

Cysteine 45 is modified (cysteine sulfinic acid (-SO2H)). The active-site Nucleophile is cysteine 104. At cysteine 104 the chain carries Cysteine sulfinic acid (-SO2H); alternate.

Post-translationally, oxidation of Cys-45 and Cys-104 in response to oxidative stress. Levels of oxidation increase with age. Expressed in the head and testis (at protein level). Ubiquitously expressed at constant levels.

It is found in the mitochondrion. The protein resides in the cytoplasm. The protein localises to the nucleus. In terms of biological role, plays an important role in cell protection against oxidative stress and cell death by acting as a oxidative stress sensor. Does not play a role in methylglyoxal detoxification. Plays a role in mitochondrial function together with Pink1. In motor neurons regulates structural synaptic plasticity of locomotor behavior as part of the PTEN-phosphatidylinositol 3-kinase pathway in response to oxygen species (ROS) levels. In Drosophila melanogaster (Fruit fly), this protein is Protein dj-1beta.